The following is a 617-amino-acid chain: Zinc finger protein 221 (617 aa).

In terms of domain architecture, KRAB spans 30–100 (VTFKDVAVVF…KTTSQREGNS (71 aa)). 3 consecutive C2H2-type zinc fingers follow at residues 170–192 (YRCN…QQSH), 198–220 (HTCG…QRVH), and 226–248 (YKCD…QRVH). A C2H2-type 4; degenerate zinc finger spans residues 254–276 (FKCGQCGKGFHSRSALNVHCKLH). 11 C2H2-type zinc fingers span residues 282–304 (YNCE…QRIH), 310–332 (FKCD…SMVH), 338–360 (FRCD…SMVH), 366–388 (YKCE…QMVH), 394–416 (YNCK…QQVH), 422–444 (FKCE…QRSH), 450–472 (YNCE…QRVH), 478–500 (YNCK…QRLH), 506–528 (FKCE…QTCH), 534–556 (YKCE…QRVH), and 562–584 (YNCK…QRLH).

This sequence belongs to the krueppel C2H2-type zinc-finger protein family.

It localises to the nucleus. In terms of biological role, may be involved in transcriptional regulation. This is Zinc finger protein 221 (ZNF221) from Homo sapiens (Human).